Reading from the N-terminus, the 254-residue chain is tRNA (guanine-N(1)-)-methyltransferase (254 aa).

S-adenosyl-L-methionine-binding positions include Gly-121 and 141–146; that span reads LGDYVL.

This sequence belongs to the RNA methyltransferase TrmD family. In terms of assembly, homodimer.

It is found in the cytoplasm. It carries out the reaction guanosine(37) in tRNA + S-adenosyl-L-methionine = N(1)-methylguanosine(37) in tRNA + S-adenosyl-L-homocysteine + H(+). In terms of biological role, specifically methylates guanosine-37 in various tRNAs. This chain is tRNA (guanine-N(1)-)-methyltransferase, found in Psychrobacter cryohalolentis (strain ATCC BAA-1226 / DSM 17306 / VKM B-2378 / K5).